The primary structure comprises 453 residues: Tubulin delta chain (453 aa).

Position 143–149 (143–149) interacts with GTP; it reads AGGTGSG.

It belongs to the tubulin family. In terms of assembly, found in a complex with TEDC1, TEDC2, TUBE1 and TUBD1.

The protein localises to the nucleus. It is found in the cytoplasm. Its subcellular location is the cytoskeleton. The protein resides in the microtubule organizing center. It localises to the centrosome. The protein localises to the centriole. It is found in the cell projection. Its subcellular location is the cilium. Its function is as follows. Acts as a positive regulator of hedgehog signaling and regulates ciliary function. The sequence is that of Tubulin delta chain (TUBD1) from Macaca fascicularis (Crab-eating macaque).